Reading from the N-terminus, the 279-residue chain is uncharacterized protein (279 aa).

This is an uncharacterized protein from Acanthamoeba polyphaga mimivirus (APMV).